A 206-amino-acid polypeptide reads, in one-letter code: Ion-translocating oxidoreductase complex subunit G (206 aa).

The helical transmembrane segment at 9–29 threads the bilayer; that stretch reads GITLALFAAGSTGLTAVINQM. Position 174 is an FMN phosphoryl threonine (Thr-174).

The protein belongs to the RnfG family. As to quaternary structure, the complex is composed of six subunits: RsxA, RsxB, RsxC, RsxD, RsxE and RsxG. The cofactor is FMN.

The protein resides in the cell inner membrane. Functionally, part of a membrane-bound complex that couples electron transfer with translocation of ions across the membrane. Required to maintain the reduced state of SoxR. The polypeptide is Ion-translocating oxidoreductase complex subunit G (Salmonella typhimurium (strain LT2 / SGSC1412 / ATCC 700720)).